The sequence spans 218 residues: Small ribosomal subunit protein uS3 (218 aa).

The 71-residue stretch at 43 to 113 (IREHIERKLA…KVQVNVREVS (71 aa)) folds into the KH type-2 domain.

The protein belongs to the universal ribosomal protein uS3 family. As to quaternary structure, part of the 30S ribosomal subunit. Forms a tight complex with proteins S10 and S14.

In terms of biological role, binds the lower part of the 30S subunit head. Binds mRNA in the 70S ribosome, positioning it for translation. This is Small ribosomal subunit protein uS3 from Rubrobacter xylanophilus (strain DSM 9941 / JCM 11954 / NBRC 16129 / PRD-1).